The primary structure comprises 1187 residues: AT-rich interactive domain-containing protein 5B (1187 aa).

Residue Lys130 forms a Glycyl lysine isopeptide (Lys-Gly) (interchain with G-Cter in SUMO2) linkage. Residues 251–279 (RPRKKKPCPQRRDSFSGVKDSNNNSDGKA) are disordered. The residue at position 264 (Ser264) is a Phosphoserine. The ARID domain occupies 319 to 411 (RADEQAFLVA…LILPYERFIK (93 aa)). The residue at position 337 (Lys337) is an N6,N6-dimethyllysine. The interval 413-611 (EEDKPLPPIK…QPPLASQSEL (199 aa)) is disordered. Residue Lys446 forms a Glycyl lysine isopeptide (Lys-Gly) (interchain with G-Cter in SUMO2) linkage. Residues 447–459 (HEIPKSKKEKENA) are compositionally biased toward basic and acidic residues. A compositionally biased stretch (low complexity) spans 460–469 (PKPQESPEVS). Residues Lys494 and Lys496 each participate in a glycyl lysine isopeptide (Lys-Gly) (interchain with G-Cter in SUMO2) cross-link. A compositionally biased stretch (basic and acidic residues) spans 512–522 (ADPEKDSDADR). Residues 527 to 537 (ATAAEEAGEQG) show a composition bias toward low complexity. Residues Lys767, Lys774, Lys803, Lys810, Lys893, Lys916, Lys920, Lys935, Lys988, Lys1000, and Lys1013 each participate in a glycyl lysine isopeptide (Lys-Gly) (interchain with G-Cter in SUMO2) cross-link. Residues 891 to 977 (DKKPAPAEAP…YPEPLSRASR (87 aa)) are disordered. At Ser1032 the chain carries Phosphoserine. Positions 1032–1065 (SPLDPPKEACGKDKGAELEGEGGKAAAAHGGPAA) are disordered. The segment covering 1036 to 1048 (PPKEACGKDKGAE) has biased composition (basic and acidic residues). Glycyl lysine isopeptide (Lys-Gly) (interchain with G-Cter in SUMO2) cross-links involve residues Lys1055 and Lys1069. Over residues 1055-1065 (KAAAAHGGPAA) the composition is skewed to low complexity. Ser1132 carries the post-translational modification Phosphoserine.

The protein belongs to the ARID5B family. Post-translationally, methylation at Lys-337 prevents DNA-binding. Demethylation by PHF2 promotes recruitment of the PHF2-ARID5B complex to promoters.

It localises to the nucleus. Its function is as follows. Transcription coactivator that binds to the 5'-AATA[CT]-3' core sequence and plays a key role in adipogenesis and liver development. Acts by forming a complex with phosphorylated PHF2, which mediates demethylation at Lys-337, leading to target the PHF2-ARID5B complex to target promoters, where PHF2 mediates demethylation of dimethylated 'Lys-9' of histone H3 (H3K9me2), followed by transcription activation of target genes. The PHF2-ARID5B complex acts as a coactivator of HNF4A in liver. Required for adipogenesis: regulates triglyceride metabolism in adipocytes by regulating expression of adipogenic genes. Overexpression leads to induction of smooth muscle marker genes, suggesting that it may also act as a regulator of smooth muscle cell differentiation and proliferation. The polypeptide is AT-rich interactive domain-containing protein 5B (ARID5B) (Canis lupus familiaris (Dog)).